The sequence spans 210 residues: Dephospho-CoA kinase (210 aa).

A DPCK domain is found at 4 to 202 (WVGLTGGIGS…AFYSGIFASK (199 aa)). Position 12 to 17 (12 to 17 (GSGKSA)) interacts with ATP.

The protein belongs to the CoaE family.

The protein resides in the cytoplasm. The catalysed reaction is 3'-dephospho-CoA + ATP = ADP + CoA + H(+). The protein operates within cofactor biosynthesis; coenzyme A biosynthesis; CoA from (R)-pantothenate: step 5/5. In terms of biological role, catalyzes the phosphorylation of the 3'-hydroxyl group of dephosphocoenzyme A to form coenzyme A. This is Dephospho-CoA kinase from Neisseria gonorrhoeae (strain ATCC 700825 / FA 1090).